The primary structure comprises 200 residues: Pyridoxal 5'-phosphate synthase subunit PdxT (200 aa).

Residue 46–48 coordinates L-glutamine; the sequence is GES. C78 functions as the Nucleophile in the catalytic mechanism. L-glutamine contacts are provided by residues R107 and 138 to 139; that span reads IR. Catalysis depends on charge relay system residues H175 and E177.

The protein belongs to the glutaminase PdxT/SNO family. As to quaternary structure, in the presence of PdxS, forms a dodecamer of heterodimers. Only shows activity in the heterodimer.

The catalysed reaction is aldehydo-D-ribose 5-phosphate + D-glyceraldehyde 3-phosphate + L-glutamine = pyridoxal 5'-phosphate + L-glutamate + phosphate + 3 H2O + H(+). The enzyme catalyses L-glutamine + H2O = L-glutamate + NH4(+). The protein operates within cofactor biosynthesis; pyridoxal 5'-phosphate biosynthesis. Its function is as follows. Catalyzes the hydrolysis of glutamine to glutamate and ammonia as part of the biosynthesis of pyridoxal 5'-phosphate. The resulting ammonia molecule is channeled to the active site of PdxS. The polypeptide is Pyridoxal 5'-phosphate synthase subunit PdxT (Corynebacterium glutamicum (strain R)).